A 369-amino-acid chain; its full sequence is Protein RecA (369 aa).

Residue 77-84 (GPESSGKT) coordinates ATP.

The protein belongs to the RecA family.

The protein localises to the cytoplasm. Its function is as follows. Can catalyze the hydrolysis of ATP in the presence of single-stranded DNA, the ATP-dependent uptake of single-stranded DNA by duplex DNA, and the ATP-dependent hybridization of homologous single-stranded DNAs. It interacts with LexA causing its activation and leading to its autocatalytic cleavage. The polypeptide is Protein RecA (Corynebacterium pseudotuberculosis (strain C231)).